A 433-amino-acid polypeptide reads, in one-letter code: Putative tartrate transporter (433 aa).

The next 11 membrane-spanning stretches (helical) occupy residues 17 to 37 (IVPF…NIGF), 47 to 67 (GFSS…YFLF), 82 to 102 (IWIA…AFVQ), 113 to 133 (LLGV…SFWF), 139 to 159 (AAVT…GSPI), 177 to 197 (WMFL…LFYL), 242 to 262 (VIAL…LGIW), 275 to 295 (LQVG…MVLW), 314 to 334 (LLAA…TVLI), 350 to 370 (LWSM…IATI), and 395 to 415 (FAGG…VTLV).

This sequence belongs to the major facilitator superfamily. Phthalate permease family.

Its subcellular location is the cell membrane. Its function is as follows. Component of the tartrate utilization system and may allow entry of tartrate and tartrate dehydrogenase. This is Putative tartrate transporter (ttuB) from Agrobacterium vitis (Rhizobium vitis).